The primary structure comprises 412 residues: Phytoene synthase 1, chloroplastic (412 aa).

A chloroplast-targeting transit peptide spans 1-129 (MSVALLWVVS…AYDRCGEVCA (129 aa)).

Belongs to the phytoene/squalene synthase family. Monomer. Interacts with SGR1.

It is found in the plastid. The protein localises to the chloroplast. The enzyme catalyses 2 (2E,6E,10E)-geranylgeranyl diphosphate = 15-cis-phytoene + 2 diphosphate. It functions in the pathway carotenoid biosynthesis; phytoene biosynthesis; all-trans-phytoene from geranylgeranyl diphosphate: step 1/1. In terms of biological role, catalyzes the reaction from prephytoene diphosphate to phytoene. The protein is Phytoene synthase 1, chloroplastic (PSY1) of Solanum lycopersicum (Tomato).